Here is a 359-residue protein sequence, read N- to C-terminus: Peptide chain release factor 1 (359 aa).

Position 236 is an N5-methylglutamine (Gln236).

It belongs to the prokaryotic/mitochondrial release factor family. Post-translationally, methylated by PrmC. Methylation increases the termination efficiency of RF1.

The protein resides in the cytoplasm. Its function is as follows. Peptide chain release factor 1 directs the termination of translation in response to the peptide chain termination codons UAG and UAA. This is Peptide chain release factor 1 (prfA) from Mycoplasma genitalium (strain ATCC 33530 / DSM 19775 / NCTC 10195 / G37) (Mycoplasmoides genitalium).